A 186-amino-acid chain; its full sequence is MKPVLVLAILAVLFLRLADSVPRPLNVVVSEIKSAHFRVEENQCWFHMGMLYFKGRMSGNFTKKHFVNVGIVSQSYMDRLQVSGEQYHHDERGAYFEWNIGGYPVSHTVDMVDITLSTRWGDPKKYAACVPQVRMDYSSQTINWYLQRSMRDDNWGLLFRTLLVYLFSLVVLVLLTVGVSARLRFI.

Residues 1-20 form the signal peptide; it reads MKPVLVLAILAVLFLRLADS. Residues 21-160 are Lumenal-facing; sequence VPRPLNVVVS…RDDNWGLLFR (140 aa). Cysteines 44 and 129 form a disulfide. N60 carries N-linked (GlcNAc...) asparagine; by host glycosylation. Residues 161–181 traverse the membrane as a helical segment; it reads TLLVYLFSLVVLVLLTVGVSA. Topologically, residues 182 to 186 are cytoplasmic; sequence RLRFI.

Belongs to the cytomegalovirus US2 family. Monomer. The signal sequence is not cleaved. Post-translationally, N-glycosylated; mostly exists in a high-mannose form.

Its subcellular location is the host endoplasmic reticulum membrane. Its function is as follows. Retains, but does not degrade MHC class I heterodimers in the endoplasmic reticulum during the immediate-early period of virus infection, thereby impairing their transport and maturation. Forms a complex with beta-2-microglobulin-associated class I heavy chains, which accumulate in the ER. In consequence, infected cells are masked for immune recognition by cytotoxic T-lymphocytes. This Human cytomegalovirus (strain Merlin) (HHV-5) protein is Membrane glycoprotein US3 (US3).